Here is a 554-residue protein sequence, read N- to C-terminus: CTP synthase (554 aa).

The interval 1–279 is amidoligase domain; sequence MSQPRAEHVT…DAFLIRRLDL (279 aa). Ser21 contributes to the CTP binding site. Residue Ser21 participates in UTP binding. ATP contacts are provided by residues 22–27 and Asp79; that span reads SLGKGL. Mg(2+)-binding residues include Asp79 and Glu153. Residues 160–162, 200–205, and Lys236 contribute to the CTP site; these read DIE and KTKPTQ. Residues 200–205 and Lys236 contribute to the UTP site; that span reads KTKPTQ. Positions 304-551 constitute a Glutamine amidotransferase type-1 domain; the sequence is TVALVGKYID…VKAGLKHKND (248 aa). Gly367 lines the L-glutamine pocket. Cys394 acts as the Nucleophile; for glutamine hydrolysis in catalysis. L-glutamine-binding positions include 395-398, Glu417, and Arg478; that span reads LGLQ. Catalysis depends on residues His524 and Glu526.

This sequence belongs to the CTP synthase family. Homotetramer.

It carries out the reaction UTP + L-glutamine + ATP + H2O = CTP + L-glutamate + ADP + phosphate + 2 H(+). It catalyses the reaction L-glutamine + H2O = L-glutamate + NH4(+). The enzyme catalyses UTP + NH4(+) + ATP = CTP + ADP + phosphate + 2 H(+). The protein operates within pyrimidine metabolism; CTP biosynthesis via de novo pathway; CTP from UDP: step 2/2. With respect to regulation, allosterically activated by GTP, when glutamine is the substrate; GTP has no effect on the reaction when ammonia is the substrate. The allosteric effector GTP functions by stabilizing the protein conformation that binds the tetrahedral intermediate(s) formed during glutamine hydrolysis. Inhibited by the product CTP, via allosteric rather than competitive inhibition. Its function is as follows. Catalyzes the ATP-dependent amination of UTP to CTP with either L-glutamine or ammonia as the source of nitrogen. Regulates intracellular CTP levels through interactions with the four ribonucleotide triphosphates. The polypeptide is CTP synthase (Corynebacterium kroppenstedtii (strain DSM 44385 / JCM 11950 / CIP 105744 / CCUG 35717)).